A 474-amino-acid chain; its full sequence is ATP synthase subunit beta 2 (474 aa).

157–164 (GGAGVGKT) contributes to the ATP binding site.

Belongs to the ATPase alpha/beta chains family. F-type ATPases have 2 components, CF(1) - the catalytic core - and CF(0) - the membrane proton channel. CF(1) has five subunits: alpha(3), beta(3), gamma(1), delta(1), epsilon(1). CF(0) has three main subunits: a(1), b(2) and c(9-12). The alpha and beta chains form an alternating ring which encloses part of the gamma chain. CF(1) is attached to CF(0) by a central stalk formed by the gamma and epsilon chains, while a peripheral stalk is formed by the delta and b chains.

The protein localises to the cell inner membrane. The enzyme catalyses ATP + H2O + 4 H(+)(in) = ADP + phosphate + 5 H(+)(out). Functionally, produces ATP from ADP in the presence of a proton gradient across the membrane. The catalytic sites are hosted primarily by the beta subunits. The chain is ATP synthase subunit beta 2 from Polaromonas naphthalenivorans (strain CJ2).